A 980-amino-acid chain; its full sequence is GPI inositol-deacylase (980 aa).

Over Met-1 to Cys-7 the chain is Cytoplasmic. Residues Ala-8 to Val-28 form a helical membrane-spanning segment. Topologically, residues Glu-29 to Arg-628 are lumenal. Ser-170 is a catalytic residue. Asn-427, Asn-517, and Asn-596 each carry an N-linked (GlcNAc...) asparagine glycan. The chain crosses the membrane as a helical span at residues Leu-629–Leu-649. At Arg-650 to Ser-709 the chain is on the cytoplasmic side. The chain crosses the membrane as a helical span at residues Ile-710–Ala-730. Residues Leu-731–Thr-774 are Lumenal-facing. A helical transmembrane segment spans residues Ala-775–Leu-795. Residues Ser-796–His-867 are Cytoplasmic-facing. Positions Ala-821 to Glu-853 are disordered. Positions Glu-824–Glu-834 are enriched in acidic residues. A helical transmembrane segment spans residues Val-868–Trp-888. The Lumenal segment spans residues Leu-889–Gly-895. A helical membrane pass occupies residues Ile-896 to Leu-916. The Cytoplasmic segment spans residues Leu-917–Trp-929. A helical transmembrane segment spans residues Met-930–Ile-950. Residues Tyr-951–Thr-954 are Lumenal-facing. A helical transmembrane segment spans residues Tyr-955–Gly-975. Residues Arg-976–Val-980 are Cytoplasmic-facing.

It belongs to the GPI inositol-deacylase family.

It localises to the endoplasmic reticulum membrane. In terms of biological role, involved in inositol deacylation of GPI-anchored proteins. The polypeptide is GPI inositol-deacylase (Drosophila melanogaster (Fruit fly)).